Here is a 293-residue protein sequence, read N- to C-terminus: Dioxygenase cdmA (293 aa).

Fe cation contacts are provided by His-135, Asp-137, and His-212.

This sequence belongs to the PhyH family. In terms of assembly, homodimer. Requires Fe cation as cofactor.

The catalysed reaction is chrodrimanin C + 2-oxoglutarate + O2 = verruculide A + succinate + CO2 + H2O. The enzyme catalyses chrodrimanin H + 2-oxoglutarate + O2 = chrodrimanin E + succinate + CO2 + H2O. Its pathway is secondary metabolite biosynthesis; terpenoid biosynthesis. Its function is as follows. Dioxygenase; part of the gene cluster that mediates the biosynthesis of chrodrimanin B, a meroterpenoid that acts as a potent blocker of insect GABA-gated chloride channels. The first step of the pathway is the biosynthesis of 6-hydroxymellein by the polyketide synthase cdmE. The prenyltransferase cdmH acts as a 6-hydroxymellein 5-farnesyltransferase and produces the hydrophobic metabolite verruculide C. The FAD-dependent monooxygenase cdmI further converts verruculide C into verruculide B. The terpene cyclase cdmG then produced the pentacyclic molecule 3-hydroxypentacecilide A, the backbone structure of chrodrimanin B, via folding the farnesyl moiety of the substrate into the chair-boat conformation. The short-chain dehydrogenase/reductase cdmF functions as the 3-OH dehydrogenase that oxidizes the C-3 hydroxyl group of 3-hydroxypentacecilide A and produces chrodrimanin C, the dehydrogenated product of 3-hydroxypentacecilide A. The cytochrome P450 monooxygenase cdmJ then accepts both 3-hydroxypentacecilide A and chrodrimanin C and functions as a C-7-beta-hydroxylase to produce respectively chrodrimanin H and chrodrimanin F. The dioxygenase cdmA accepts chrodrimanin H to afford chrodrimanin E, which is further transformed to chrodrimanin A by the dioxygenase cdmD. CdmA can also accept chrodrimanin C as substrate to convert it into verruculide A, which is further converted into chrodrimanin T by cdmD. The last step of the biosynthesis is proposed to be performed by the acetyltransferase cdmC which acetylates chrodrimanin A to yield chrodrimanin B. The pathway may also lead to the production of additional shunt products, including chrodrimanins T and U. The polypeptide is Dioxygenase cdmA (Talaromyces verruculosus (Penicillium verruculosum)).